A 338-amino-acid polypeptide reads, in one-letter code: Ribosomal RNA small subunit methyltransferase H (338 aa).

S-adenosyl-L-methionine contacts are provided by residues G53–H55, D72, Y99, D123, and Q130. Positions I277–P298 are disordered.

The protein belongs to the methyltransferase superfamily. RsmH family.

The protein resides in the cytoplasm. It catalyses the reaction cytidine(1402) in 16S rRNA + S-adenosyl-L-methionine = N(4)-methylcytidine(1402) in 16S rRNA + S-adenosyl-L-homocysteine + H(+). In terms of biological role, specifically methylates the N4 position of cytidine in position 1402 (C1402) of 16S rRNA. This chain is Ribosomal RNA small subunit methyltransferase H, found in Rhodococcus opacus (strain B4).